A 359-amino-acid polypeptide reads, in one-letter code: GDSL esterase/lipase At5g03610 (359 aa).

A signal peptide spans methionine 1–glycine 22. The active-site Nucleophile is serine 50. N-linked (GlcNAc...) asparagine glycosylation is found at asparagine 136, asparagine 236, and asparagine 259. Residues aspartate 332 and histidine 335 contribute to the active site.

This sequence belongs to the 'GDSL' lipolytic enzyme family.

The protein localises to the secreted. In Arabidopsis thaliana (Mouse-ear cress), this protein is GDSL esterase/lipase At5g03610.